Reading from the N-terminus, the 943-residue chain is Calcium-activated chloride channel regulator 2 (943 aa).

Residues 1 to 31 (MTQRSIAGPICNLKFVTLLVALSSELPFLGA) form the signal peptide. Residues 32–901 (GVQLQDNGYN…SDPVPARDYL (870 aa)) lie on the Extracellular side of the membrane. Residues 54–205 (NQNLISNIKE…CSSDITGIFV (152 aa)) form a metalloprotease domain region. N-linked (GlcNAc...) asparagine glycans are attached at residues Asn74 and Asn150. His164 provides a ligand contact to Zn(2+). Residue Glu165 is part of the active site. Residues His168 and Asp175 each contribute to the Zn(2+) site. N-linked (GlcNAc...) asparagine glycosylation is present at Asn231. The VWFA domain occupies 311-483 (VVCLVLDVSS…NSMIDAFSRI (173 aa)). 2 N-linked (GlcNAc...) asparagine glycosylation sites follow: Asn522 and Asn822. A helical membrane pass occupies residues 902–922 (ILKGVLTAMGLIGIICLIIVV). At 923–943 (THHTLSRKKRADKKENGTKLL) the chain is on the cytoplasmic side.

Belongs to the CLCR family. The 141 kDa mature form is autoproteolytically cleaved by the metalloprotease domain, producing a 109 kDa form and a 35 kDa form. The cleavage is necessary for calcium-activated chloride channel (CaCC) activation activity. In terms of processing, N-glycosylated. In terms of tissue distribution, expressed in cornea, skin, vagina, esophagus, and larynx (at protein level). Expressed in trachea and mammary gland. Weakly expressed in testis and kidney. Highly expressed in corneal epithelium, colon and trachea. Moderately expressed in brain, urogenital organs, bladder, uterus and prostate. Highly expressed in tissues containing stratified epithelium including cornea, esophagus, larynx, skin and vagina than those tissues which contain only epithelial monolayers. Expressed in normal breast epithelium but not in breast cancer. Highly expressed during epithelial stratification. Expressed in endothelial cells of lung. Expressed selectively in endothelia of small pulmonary arteries, arterioles, and subpleural and interlobular venules.

It is found in the cell membrane. The protein localises to the basal cell membrane. Its subcellular location is the cell junction. It localises to the secreted. Plays a role in modulating chloride current across the plasma membrane in a calcium-dependent manner, and cell adhesion. Involved in basal cell adhesion and/or stratification of squamous epithelia. May act as a tumor suppressor in breast and colorectal cancer. Plays a key role for cell adhesion in the beginning stages of lung metastasis via the binding to ITGB4. This chain is Calcium-activated chloride channel regulator 2 (CLCA2), found in Homo sapiens (Human).